Reading from the N-terminus, the 280-residue chain is Equatorin (280 aa).

Positions 1 to 19 (MDFILLIFLSGVFLPNIFS) are cleaved as a signal peptide. Residues 20–183 (LQPTVEQDPG…LSELEEIKLK (164 aa)) are Vesicular-facing. The interval 112–131 (ATASGEEDKRSEPSRKSSTP) is disordered. The segment covering 117–126 (EEDKRSEPSR) has biased composition (basic and acidic residues). A glycan (N-linked (GlcNAc...) asparagine) is linked at Asn-145. The helical transmembrane segment at 184–204 (LMLGISLMTLILLIPLLIFCF) threads the bilayer. Residues 205 to 280 (ATLYKLRHLR…AEVTEERISE (76 aa)) lie on the Cytoplasmic side of the membrane. Ser-279 is modified (phosphoserine).

In terms of assembly, interacts with SNAP25. Post-translationally, highly N- and O-glycosylated; contains sialic acid. Highly expressed in testis and epididymis. Low expression in other tissues.

The protein localises to the cytoplasmic vesicle. It localises to the secretory vesicle. It is found in the acrosome membrane. Its subcellular location is the acrosome inner membrane. The protein resides in the acrosome outer membrane. Acrosomal membrane-anchored protein involved in the process of fertilization and in acrosome biogenesis. This is Equatorin (Eqtn) from Rattus norvegicus (Rat).